We begin with the raw amino-acid sequence, 148 residues long: Large ribosomal subunit protein bL9 (148 aa).

This sequence belongs to the bacterial ribosomal protein bL9 family.

Binds to the 23S rRNA. This chain is Large ribosomal subunit protein bL9, found in Clostridium beijerinckii (strain ATCC 51743 / NCIMB 8052) (Clostridium acetobutylicum).